A 127-amino-acid polypeptide reads, in one-letter code: Transthyretin (127 aa).

Position 10 is a sulfocysteine (cysteine 10). Lysine 15 is a binding site for L-thyroxine. Glutamate 42 carries the 4-carboxyglutamate modification. Glutamate 54 is an L-thyroxine binding site. A glycan (N-linked (GlcNAc...) asparagine) is linked at asparagine 98. L-thyroxine is bound at residue serine 117.

Belongs to the transthyretin family. As to quaternary structure, homotetramer. Dimer of dimers. In the homotetramer, subunits assemble around a central channel that can accommodate two ligand molecules. Interacts with RBP4. Post-translationally, sulfonation of the reactive cysteine Cys-10 enhances the stability of the native conformation of TTR, avoiding misassembly of the protein leading to amyloid formation. In terms of tissue distribution, detected in serum (at protein level).

The protein localises to the secreted. Functionally, thyroid hormone-binding protein. Probably transports thyroxine from the bloodstream to the brain. The protein is Transthyretin (TTR) of Oryctolagus cuniculus (Rabbit).